Here is a 467-residue protein sequence, read N- to C-terminus: Glutamyl-tRNA(Gln) amidotransferase subunit A (467 aa).

Residues Lys57 and Ser132 each act as charge relay system in the active site. Ser156 (acyl-ester intermediate) is an active-site residue.

Belongs to the amidase family. GatA subfamily. In terms of assembly, heterotrimer of A, B and C subunits.

The enzyme catalyses L-glutamyl-tRNA(Gln) + L-glutamine + ATP + H2O = L-glutaminyl-tRNA(Gln) + L-glutamate + ADP + phosphate + H(+). Allows the formation of correctly charged Gln-tRNA(Gln) through the transamidation of misacylated Glu-tRNA(Gln) in organisms which lack glutaminyl-tRNA synthetase. The reaction takes place in the presence of glutamine and ATP through an activated gamma-phospho-Glu-tRNA(Gln). This Pseudothermotoga lettingae (strain ATCC BAA-301 / DSM 14385 / NBRC 107922 / TMO) (Thermotoga lettingae) protein is Glutamyl-tRNA(Gln) amidotransferase subunit A.